The primary structure comprises 687 residues: Ferric vulnibactin receptor VuuA (687 aa).

A signal peptide spans 1-37; the sequence is MAALRPARTSVAEKKTFKLHALSAVVMGLCASGQAYA. A TBDR plug domain is found at 63 to 185; that stretch reads TIYDTSSSVQ…SAGAIVMKTN (123 aa). One can recognise a TBDR beta-barrel domain in the interval 190 to 687; the sequence is HFESAVKAGV…MIGASLQLNF (498 aa). The TonB C-terminal box signature appears at 670 to 687; the sequence is EPLKQQPRMIGASLQLNF.

It belongs to the TonB-dependent receptor family.

It localises to the cell outer membrane. In terms of biological role, involved in the uptake of iron in complex with vulnibactin, a catecholate siderophore synthesized by V.vulnificus. Binds and transports ferric vulnibactin across the outer membrane. The energy source is provided by the inner membrane TonB system. In Vibrio vulnificus, this protein is Ferric vulnibactin receptor VuuA.